The chain runs to 30 residues: U5-ctenitoxin-Pk1b (30 aa).

Intrachain disulfides connect Cys6–Cys23 and Cys13–Cys29.

The protein belongs to the neurotoxin 04 (omega-agtx) family. 02 (Tx1) subfamily. In terms of tissue distribution, expressed by the venom gland.

The protein resides in the secreted. In terms of biological role, lethal neurotoxin. Causes spastic paralysis and death in mice in 4-6 minutes after intracerebroventricular injection at dose levels of 1.5 ug per mouse. The protein is U5-ctenitoxin-Pk1b of Phoneutria keyserlingi (Brazilian wandering spider).